The primary structure comprises 509 residues: tRNA-2-methylthio-N(6)-dimethylallyladenosine synthase (509 aa).

A disordered region spans residues 1–21 (MNEKQKLESGQVHPSDKKSEK). The region spanning 66 to 184 (RKFYIRTYGC…LPELLSEAYL (119 aa)) is the MTTase N-terminal domain. The [4Fe-4S] cluster site is built by cysteine 75, cysteine 111, cysteine 145, cysteine 221, cysteine 225, and cysteine 228. A Radical SAM core domain is found at 207-437 (RNGKIKGWVN…NALVNEISAK (231 aa)). The TRAM domain maps to 440–503 (KEYEGKVVEV…TWSLDGEMVG (64 aa)).

The protein belongs to the methylthiotransferase family. MiaB subfamily. As to quaternary structure, monomer. [4Fe-4S] cluster is required as a cofactor.

The protein localises to the cytoplasm. The catalysed reaction is N(6)-dimethylallyladenosine(37) in tRNA + (sulfur carrier)-SH + AH2 + 2 S-adenosyl-L-methionine = 2-methylsulfanyl-N(6)-dimethylallyladenosine(37) in tRNA + (sulfur carrier)-H + 5'-deoxyadenosine + L-methionine + A + S-adenosyl-L-homocysteine + 2 H(+). It carries out the reaction N(6)-dimethylallyladenosine(37) in tRNA + (sulfur carrier)-SH + AH2 + S-adenosyl-L-methionine = 2-thio-N(6)-dimethylallyladenosine(37) in tRNA + (sulfur carrier)-H + 5'-deoxyadenosine + L-methionine + A + H(+). It catalyses the reaction 2-thio-N(6)-dimethylallyladenosine(37) in tRNA + S-adenosyl-L-methionine = 2-methylsulfanyl-N(6)-dimethylallyladenosine(37) in tRNA + S-adenosyl-L-homocysteine + H(+). Its function is as follows. Catalyzes the methylthiolation of N6-(dimethylallyl)adenosine (i(6)A), leading to the formation of 2-methylthio-N6-(dimethylallyl)adenosine (ms(2)i(6)A) at position 37 in tRNAs that read codons beginning with uridine. This Bacillus subtilis (strain 168) protein is tRNA-2-methylthio-N(6)-dimethylallyladenosine synthase.